Reading from the N-terminus, the 117-residue chain is NADH-ubiquinone oxidoreductase chain 3 (117 aa).

3 helical membrane-spanning segments follow: residues 2 to 22, 56 to 76, and 85 to 105; these read ILYVLPTSLSLCLLLMIIYLL, FFILTVLFLIFDVEVVLLFPV, and SPLIIMSIILFMMVLLIGLLY.

It belongs to the complex I subunit 3 family.

Its subcellular location is the mitochondrion membrane. The enzyme catalyses a ubiquinone + NADH + 5 H(+)(in) = a ubiquinol + NAD(+) + 4 H(+)(out). Functionally, core subunit of the mitochondrial membrane respiratory chain NADH dehydrogenase (Complex I) that is believed to belong to the minimal assembly required for catalysis. Complex I functions in the transfer of electrons from NADH to the respiratory chain. The immediate electron acceptor for the enzyme is believed to be ubiquinone. This Albinaria caerulea (Land snail) protein is NADH-ubiquinone oxidoreductase chain 3 (ND3).